Reading from the N-terminus, the 837-residue chain is Ubiquitin carboxyl-terminal hydrolase A (837 aa).

A UBP-type; degenerate zinc finger spans residues 166-277 (PSAFAESIIQ…QHLTHWGLNP (112 aa)). One can recognise a USP domain in the interval 319-835 (TGIENLGNSC…LGYIYFYKRQ (517 aa)). Cys328 serves as the catalytic Nucleophile. Residues 628–669 (SFNQEVLDTLLSMDFPLVRCKKALLATGGKDAELAMNWIFEH) form the UBA 1 domain. Residues 676–695 (DIEQTPVNNNNNNNNSSNSN) form a disordered region. A compositionally biased stretch (low complexity) spans 683 to 695 (NNNNNNNNSSNSN). Residues 700 to 740 (VFNSQDVDNIIGMGFTDSQAKLALKNTKGNLERAADWLFSH) form the UBA 2 domain. His797 acts as the Proton acceptor in catalysis.

Belongs to the peptidase C19 family.

It carries out the reaction Thiol-dependent hydrolysis of ester, thioester, amide, peptide and isopeptide bonds formed by the C-terminal Gly of ubiquitin (a 76-residue protein attached to proteins as an intracellular targeting signal).. Required for development but not growth. The sequence is that of Ubiquitin carboxyl-terminal hydrolase A (ubpA) from Dictyostelium discoideum (Social amoeba).